The sequence spans 221 residues: tRNA (guanine-N(7)-)-methyltransferase (221 aa).

S-adenosyl-L-methionine contacts are provided by glutamate 43, glutamate 68, and aspartate 123. Aspartate 123 is an active-site residue. Residues lysine 127, aspartate 159, and threonine 199–glutamate 202 each bind substrate.

Belongs to the class I-like SAM-binding methyltransferase superfamily. TrmB family.

The catalysed reaction is guanosine(46) in tRNA + S-adenosyl-L-methionine = N(7)-methylguanosine(46) in tRNA + S-adenosyl-L-homocysteine. It participates in tRNA modification; N(7)-methylguanine-tRNA biosynthesis. Functionally, catalyzes the formation of N(7)-methylguanine at position 46 (m7G46) in tRNA. The polypeptide is tRNA (guanine-N(7)-)-methyltransferase (Mycoplasma mycoides subsp. mycoides SC (strain CCUG 32753 / NCTC 10114 / PG1)).